The sequence spans 572 residues: ATP-dependent lipid A-core flippase (572 aa).

Helical transmembrane passes span 14–34, 55–75, 148–168, 249–269, and 272–292; these read IIPY…VAAL, VFFL…KGVL, IFLL…CFLI, MEII…SEVI, and SATP…YDPV. Positions 22-304 constitute an ABC transmembrane type-1 domain; that stretch reads FIAMFAMIVV…VSQVNSTIQQ (283 aa). In terms of domain architecture, ABC transporter spans 338–571; that stretch reads IEFHDVSFSY…EGEYQLLYNM (234 aa). 370–377 serves as a coordination point for ATP; the sequence is GPSGGGKT.

This sequence belongs to the ABC transporter superfamily. Lipid exporter (TC 3.A.1.106) family. As to quaternary structure, homodimer.

It is found in the cell inner membrane. The catalysed reaction is ATP + H2O + lipid A-core oligosaccharideSide 1 = ADP + phosphate + lipid A-core oligosaccharideSide 2.. Functionally, involved in lipopolysaccharide (LPS) biosynthesis. Translocates lipid A-core from the inner to the outer leaflet of the inner membrane. Transmembrane domains (TMD) form a pore in the inner membrane and the ATP-binding domain (NBD) is responsible for energy generation. This chain is ATP-dependent lipid A-core flippase, found in Desulfotalea psychrophila (strain LSv54 / DSM 12343).